The chain runs to 967 residues: Protein moonraker (967 aa).

The disordered stretch occupies residues 178–201 (SHPGQSDLTVPNSPPTHDPGLQPH). Over residues 179-188 (HPGQSDLTVP) the composition is skewed to polar residues. Serine 287 and serine 409 each carry phosphoserine. Disordered stretches follow at residues 401 to 431 (ALER…SRPS) and 490 to 601 (KAGK…SHLT). Positions 525-543 (QSQPHSKSRVQQTTVSSRL) are enriched in polar residues. A compositionally biased stretch (pro residues) spans 557–568 (WIPPNPTSPPAS). Residues 616 to 642 (AETSKRLKELEELKAKEIDSMQKQRLD) adopt a coiled-coil conformation. Residues serine 700 and serine 826 each carry the phosphoserine modification. The disordered stretch occupies residues 849 to 872 (RPCNGNSLDESVGTEEGSEKREAP). Residues 885–967 (GRAPLFVPPG…FTSEFLEAAT (83 aa)) form a necessary and sufficient for CEP20-binding region.

As to quaternary structure, interacts with CEP63. Interacts with WDR62. Forms a complex with OFD1 and CEP20/FOR20. Interacts with PCM1.

Its subcellular location is the cytoplasm. The protein localises to the cytoskeleton. It is found in the microtubule organizing center. The protein resides in the centrosome. It localises to the centriole. Its subcellular location is the centriolar satellite. Functionally, involved in centriole duplication. Positively regulates CEP63 centrosomal localization. Required for WDR62 centrosomal localization and promotes the centrosomal localization of CDK2. May play a role in cilium assembly. This is Protein moonraker (KIAA0753) from Homo sapiens (Human).